The following is a 312-amino-acid chain: Ribosomal RNA small subunit methyltransferase H (312 aa).

S-adenosyl-L-methionine contacts are provided by residues 35-37, D55, F79, D100, and Q107; that span reads GGH. Positions 279–312 are disordered; sequence LVGKSQRPGPGEVAANPRSRSAVMRVAERTGGAA.

It belongs to the methyltransferase superfamily. RsmH family.

The protein localises to the cytoplasm. The enzyme catalyses cytidine(1402) in 16S rRNA + S-adenosyl-L-methionine = N(4)-methylcytidine(1402) in 16S rRNA + S-adenosyl-L-homocysteine + H(+). Its function is as follows. Specifically methylates the N4 position of cytidine in position 1402 (C1402) of 16S rRNA. This chain is Ribosomal RNA small subunit methyltransferase H, found in Aromatoleum aromaticum (strain DSM 19018 / LMG 30748 / EbN1) (Azoarcus sp. (strain EbN1)).